The primary structure comprises 75 residues: Small ribosomal subunit protein bS18 (75 aa).

This sequence belongs to the bacterial ribosomal protein bS18 family. Part of the 30S ribosomal subunit. Forms a tight heterodimer with protein bS6.

In terms of biological role, binds as a heterodimer with protein bS6 to the central domain of the 16S rRNA, where it helps stabilize the platform of the 30S subunit. The protein is Small ribosomal subunit protein bS18 of Anaplasma marginale (strain St. Maries).